We begin with the raw amino-acid sequence, 53 residues long: Antitoxin RelB3 (53 aa).

Forms heterodimers with RelE and possibly a heterotetramer RelE3-RelB3(2)-RelE3 from 2 heterodimers. The heterotetramer is probably not very stable in solution.

Antitoxin component of a type II toxin-antitoxin (TA) system. Probably neutralizes the toxic activity of cognate toxin RelE. In Methanocaldococcus jannaschii (strain ATCC 43067 / DSM 2661 / JAL-1 / JCM 10045 / NBRC 100440) (Methanococcus jannaschii), this protein is Antitoxin RelB3 (relB3).